A 356-amino-acid polypeptide reads, in one-letter code: MAAEGWIWRWGWGRRCLGRPGLPGPGPGPATPLFLLLLLGPVVADITDGNSEHLKREHSLIKPYQGVGSSSMPLWDFQGSTILTSQYVRLTPDERSKEGSIWNHQPCFLKDWEMHVHFKVHGTGKKNLHGDGIALWYTRDRLVPGPVFGSKDNFHGLAIFLDTYPNDETTERVFPYISVMVNNGSLSYDHSKDGRWTELAGCTADFRNRDHDTFLAVRYSRGRLTVMTDLEDKNEWKNCIDITGVRLPTGYYFGASAGTGDLSDNHDIISMKLFQLMVEHTPDEENIDWTKIEPSVNFLKSPKDNVDDPTGNFRSGPLTGWRVFLLLLCALLGIIVCAVVGAVVFQKRQERNKRFY.

The first 44 residues, 1–44, serve as a signal peptide directing secretion; sequence MAAEGWIWRWGWGRRCLGRPGLPGPGPGPATPLFLLLLLGPVVA. The Lumenal portion of the chain corresponds to 45–322; the sequence is DITDGNSEHL…FRSGPLTGWR (278 aa). The 225-residue stretch at 52-276 folds into the L-type lectin-like domain; sequence EHLKREHSLI…DIISMKLFQL (225 aa). The a carbohydrate site is built by Ser-96 and Asp-131. Ca(2+) is bound by residues Asp-162, Tyr-164, and Asn-166. 164–166 provides a ligand contact to a carbohydrate; sequence YPN. N-linked (GlcNAc...) asparagine glycosylation occurs at Asn-183. His-190 is an a carbohydrate binding site. Asp-193 contacts Ca(2+). Cys-202 and Cys-239 are disulfide-bonded. 260–262 serves as a coordination point for a carbohydrate; sequence GDL. The chain crosses the membrane as a helical span at residues 323-345; it reads VFLLLLCALLGIIVCAVVGAVVF. The Cytoplasmic portion of the chain corresponds to 346-356; it reads QKRQERNKRFY.

Monomer. Requires Ca(2+) as cofactor. As to expression, expressed in kidney, liver, intestine, lung, spleen and heart. Low expression in brain.

It localises to the golgi apparatus membrane. Plays a role as an intracellular lectin in the early secretory pathway. Interacts with N-acetyl-D-galactosamine and high-mannose type glycans and may also bind to O-linked glycans. Involved in the transport and sorting of glycoproteins carrying high mannose-type glycans. This is Vesicular integral-membrane protein VIP36 (LMAN2) from Canis lupus familiaris (Dog).